The sequence spans 277 residues: Carbonyl reductase [NADPH] 3 (277 aa).

Position 2 is an N-acetylserine (Ser-2). NADP(+) contacts are provided by residues 10–34, 38–42, 63–64, and Asn-90; these read VTGANKGIGFAITRDLCRKFSGDVV, RDEAR, and DI. A Phosphoserine modification is found at Ser-30. Ser-140 contacts substrate. Tyr-194 acts as the Proton acceptor in catalysis. 194 to 198 provides a ligand contact to NADP(+); it reads YGVSK.

It belongs to the short-chain dehydrogenases/reductases (SDR) family.

Its subcellular location is the cytoplasm. It catalyses the reaction a secondary alcohol + NADP(+) = a ketone + NADPH + H(+). The enzyme catalyses a quinone + NADPH + H(+) = a quinol + NADP(+). Functionally, catalyzes the NADPH-dependent reduction of carbonyl compounds to their corresponding alcohols. Has low NADPH-dependent oxidoreductase activity. Acts on several orthoquinones, as well as on non-quinone compounds, such as isatin or on the anticancer drug oracin. Best substrates for CBR3 is 1,2- naphthoquinone, hence could play a role in protection against cytotoxicity of exogenous quinones. Exerts activity toward ortho-quinones but not paraquinones. No endogenous substrate for CBR3 except isatin has been identified. The protein is Carbonyl reductase [NADPH] 3 (Cbr3) of Mus musculus (Mouse).